A 248-amino-acid polypeptide reads, in one-letter code: tRNA (guanine-N(1)-)-methyltransferase (248 aa).

S-adenosyl-L-methionine contacts are provided by residues G113 and 133–138 (IGDYVL).

It belongs to the RNA methyltransferase TrmD family. As to quaternary structure, homodimer.

It is found in the cytoplasm. The enzyme catalyses guanosine(37) in tRNA + S-adenosyl-L-methionine = N(1)-methylguanosine(37) in tRNA + S-adenosyl-L-homocysteine + H(+). Functionally, specifically methylates guanosine-37 in various tRNAs. The sequence is that of tRNA (guanine-N(1)-)-methyltransferase from Shewanella woodyi (strain ATCC 51908 / MS32).